Consider the following 505-residue polypeptide: Bile acid-sensitive ion channel (505 aa).

The binds the plasma membrane and stabilizes the channel in the closed state stretch occupies residues 1 to 30; sequence MEQTEKSKVYAENGLLEKIKLCLSKKPLPS. The Cytoplasmic segment spans residues 1-61; sequence MEQTEKSKVY…NIVQNRSKIR (61 aa). Residues 62-82 form a helical membrane-spanning segment; it reads RVLWLVVVLGSVSLVTWQIYI. Residues 83–459 are Extracellular-facing; the sequence is RLLNYFTWPT…GLFCGASLIT (377 aa). Intrachain disulfides connect Cys-112–Cys-207, Cys-185–Cys-192, Cys-298–Cys-377, Cys-315–Cys-373, Cys-328–Cys-350, and Cys-330–Cys-342. N-linked (GlcNAc...) asparagine glycans are attached at residues Asn-147, Asn-163, Asn-178, and Asn-179. A glycan (N-linked (GlcNAc...) asparagine) is linked at Asn-306. Residues Asn-370, Asn-405, and Asn-421 are each glycosylated (N-linked (GlcNAc...) asparagine). The GAS motif; ion selectivity filter motif lies at 454-456; sequence GAS. Residues 460–480 traverse the membrane as a helical segment; it reads IIEIIEYLFTNFYWICIFFLL. Residues 481 to 505 lie on the Cytoplasmic side of the membrane; the sequence is KISEMTQWTPPPQNHLGNKNRIEEC.

Belongs to the amiloride-sensitive sodium channel (TC 1.A.6) family. ASIC5 subfamily. As to quaternary structure, forms homotrimeric channels. Detected in small intestine, duodenum and jejunum. Detected at very low levels in testis and rectum.

It localises to the apical cell membrane. The protein localises to the cell membrane. It catalyses the reaction Na(+)(in) = Na(+)(out). It carries out the reaction Li(+)(in) = Li(+)(out). The enzyme catalyses K(+)(in) = K(+)(out). The catalysed reaction is H(+)(in) = H(+)(out). Its activity is regulated as follows. Inhibited by the diuretic drug amiloride. In terms of biological role, forms bile acid-gated sodium channels and may play a role in bile acid-dependent absorption and secretion by epithelial cells of the bile ducts. Displays high selectivity for sodium ions but can also permit the permeation of other cations. The gating could be indirect and the consequence of alterations of the membrane environment of the channel by bile acids. As a sodium channel of type II unipolar brush cells of the vestibulocerebellum, controlling the electrical activity of these cells, could play a role in motor coordination and balance. The protein is Bile acid-sensitive ion channel of Homo sapiens (Human).